A 357-amino-acid chain; its full sequence is MSLENFGNFLTLDEKHSFIKKYFKEFYTKDFKLFASKDKHYRTRAELSFYHENDTLFYAMFDPKNKKKYIIKYLDFADEKICTFMPKLLEYLRQDNKLKEKLFGVEFLTTKQELSVTLLYHKNIEDIKSNLENLSNILHINLIARSKGKKLIFKTENLRQTLNIQGRKIFYEFNNDCFIQPNTTINEKMITWVCEILNTQKRMDLLELYCGYGNFTLALAPFFFKVLATEISKSNINFALKNCELNNTTNIHFARLSSEELSLAIKKEREFFRLKDIRLDDFNFSHVLVDPPRAGLDKSVIDLIKKYENIIYISCNPITLKENLKELSLTHRVEEFALFDQFVNTPHLECGVFLSKV.

5 residues coordinate S-adenosyl-L-methionine: Gln180, Tyr209, Asn214, Glu230, and Asp290. Catalysis depends on Cys315, which acts as the Nucleophile. Glu349 serves as the catalytic Proton acceptor.

This sequence belongs to the class I-like SAM-binding methyltransferase superfamily. RNA M5U methyltransferase family. TrmA subfamily.

It carries out the reaction uridine(54) in tRNA + S-adenosyl-L-methionine = 5-methyluridine(54) in tRNA + S-adenosyl-L-homocysteine + H(+). It catalyses the reaction uridine(341) in tmRNA + S-adenosyl-L-methionine = 5-methyluridine(341) in tmRNA + S-adenosyl-L-homocysteine + H(+). In terms of biological role, dual-specificity methyltransferase that catalyzes the formation of 5-methyluridine at position 54 (m5U54) in all tRNAs, and that of position 341 (m5U341) in tmRNA (transfer-mRNA). This is tRNA/tmRNA (uracil-C(5))-methyltransferase from Campylobacter jejuni (strain RM1221).